A 272-amino-acid polypeptide reads, in one-letter code: Tryptophan synthase alpha chain (272 aa).

Residues glutamate 49 and aspartate 60 each act as proton acceptor in the active site.

It belongs to the TrpA family. As to quaternary structure, tetramer of two alpha and two beta chains.

The enzyme catalyses (1S,2R)-1-C-(indol-3-yl)glycerol 3-phosphate + L-serine = D-glyceraldehyde 3-phosphate + L-tryptophan + H2O. Its pathway is amino-acid biosynthesis; L-tryptophan biosynthesis; L-tryptophan from chorismate: step 5/5. Its function is as follows. The alpha subunit is responsible for the aldol cleavage of indoleglycerol phosphate to indole and glyceraldehyde 3-phosphate. The chain is Tryptophan synthase alpha chain from Acidithiobacillus ferrooxidans (strain ATCC 23270 / DSM 14882 / CIP 104768 / NCIMB 8455) (Ferrobacillus ferrooxidans (strain ATCC 23270)).